A 162-amino-acid chain; its full sequence is Shikimate kinase (162 aa).

11–16 (GSGKSS) is a binding site for ATP. Ser-15 contacts Mg(2+). Residues Asp-33, Arg-57, and Gly-80 each coordinate substrate. ATP is bound at residue Arg-116. Arg-132 contributes to the substrate binding site.

It belongs to the shikimate kinase family. Monomer. Requires Mg(2+) as cofactor.

The protein localises to the cytoplasm. It catalyses the reaction shikimate + ATP = 3-phosphoshikimate + ADP + H(+). Its pathway is metabolic intermediate biosynthesis; chorismate biosynthesis; chorismate from D-erythrose 4-phosphate and phosphoenolpyruvate: step 5/7. Catalyzes the specific phosphorylation of the 3-hydroxyl group of shikimic acid using ATP as a cosubstrate. This Helicobacter pylori (strain J99 / ATCC 700824) (Campylobacter pylori J99) protein is Shikimate kinase.